The sequence spans 142 residues: Small ribosomal subunit protein uS9 (142 aa).

The protein belongs to the universal ribosomal protein uS9 family. As to quaternary structure, component of the small ribosomal subunit (SSU). Mature N.crassa ribosomes consist of a small (40S) and a large (60S) subunit. The 40S small subunit contains 1 molecule of ribosomal RNA (18S rRNA) and at least 32 different proteins. The large 60S subunit contains 3 rRNA molecules (26S, 5.8S and 5S rRNA) and at least 42 different proteins.

It is found in the cytoplasm. Component of the ribosome, a large ribonucleoprotein complex responsible for the synthesis of proteins in the cell. The small ribosomal subunit (SSU) binds messenger RNAs (mRNAs) and translates the encoded message by selecting cognate aminoacyl-transfer RNA (tRNA) molecules. The large subunit (LSU) contains the ribosomal catalytic site termed the peptidyl transferase center (PTC), which catalyzes the formation of peptide bonds, thereby polymerizing the amino acids delivered by tRNAs into a polypeptide chain. The nascent polypeptides leave the ribosome through a tunnel in the LSU and interact with protein factors that function in enzymatic processing, targeting, and the membrane insertion of nascent chains at the exit of the ribosomal tunnel. The polypeptide is Small ribosomal subunit protein uS9 (rps-16) (Neurospora crassa (strain ATCC 24698 / 74-OR23-1A / CBS 708.71 / DSM 1257 / FGSC 987)).